The chain runs to 447 residues: Tubulin beta-4 chain (447 aa).

GTP-binding residues include Q11, E71, S140, G144, T145, G146, N206, and N228. Residue E71 participates in Mg(2+) binding. Residues 428–447 are disordered; the sequence is QDATAEEYEEEEHDGEEEHA. Positions 431–447 are enriched in acidic residues; sequence TAEEYEEEEHDGEEEHA.

The protein belongs to the tubulin family. In terms of assembly, dimer of alpha and beta chains. A typical microtubule is a hollow water-filled tube with an outer diameter of 25 nm and an inner diameter of 15 nM. Alpha-beta heterodimers associate head-to-tail to form protofilaments running lengthwise along the microtubule wall with the beta-tubulin subunit facing the microtubule plus end conferring a structural polarity. Microtubules usually have 13 protofilaments but different protofilament numbers can be found in some organisms and specialized cells. Mg(2+) is required as a cofactor.

Its subcellular location is the cytoplasm. The protein resides in the cytoskeleton. Functionally, tubulin is the major constituent of microtubules, a cylinder consisting of laterally associated linear protofilaments composed of alpha- and beta-tubulin heterodimers. Microtubules grow by the addition of GTP-tubulin dimers to the microtubule end, where a stabilizing cap forms. Below the cap, tubulin dimers are in GDP-bound state, owing to GTPase activity of alpha-tubulin. The protein is Tubulin beta-4 chain (TUBB4) of Zea mays (Maize).